The following is a 432-amino-acid chain: Endosome-associated-trafficking regulator 1 (432 aa).

The residue at position 18 (Ser18) is a Phosphoserine. Basic and acidic residues predominate over residues 126–143 (DTTTSRIYPKEASRHPLG). The segment at 126-145 (DTTTSRIYPKEASRHPLGLE) is disordered. Position 148 is a phosphoserine (Ser148). A required for interaction with PTPN13 region spans residues 174–196 (LEEDEDDGWNITYLPSAVDQTHS). Residues 226 to 250 (PPWTLSDTDSRISPASPAGSPNADF) form a disordered region. A phosphoserine mark is found at Ser241 and Ser245. Coiled-coil stretches lie at residues 262–289 (LRTLQISYEALKDENSKLRRKLNEVQSF) and 315–370 (FHDL…LRSG).

It belongs to the ENTR1 family. In terms of assembly, found in a complex with ENTR1, PTPN13 and GIT1. Interacts with PTPN13 (via the FERM domain). Interacts (via N-terminus) with GIT1 (via N- and C-terminus); this interaction is direct. Interacts with NOD2. Interacts (via N-terminus) with IFT88. Interacts with VPS35. Phosphorylated.

It localises to the cytoplasm. Its subcellular location is the early endosome. It is found in the endosome. The protein localises to the recycling endosome. The protein resides in the midbody. It localises to the cytoskeleton. Its subcellular location is the microtubule organizing center. It is found in the centrosome. The protein localises to the cilium basal body. May be involved in modulation of TNF response. May be involved in presentation of TNFRSF1A on the cell surface. Involved in the endosome-to-plasma membrane trafficking and recycling of SNX27-retromer-dependent cargo proteins, such as GLUT1. Involved in the regulation of cytokinesis; the function may involve PTPN13 and GIT1. Functionally, endosome-associated protein that plays a role in membrane receptor sorting, cytokinesis and ciliogenesis. Involved in the endosome-to-plasma membrane trafficking and recycling of SNX27-retromer-dependent cargo proteins, such as GLUT1. Involved in the regulation of cytokinesis; the function may involve PTPN13 and GIT1. Plays a role in the formation of cilia. Involved in cargo protein localization, such as PKD2, at primary cilia. Involved in the presentation of the tumor necrosis factor (TNF) receptor TNFRSF1A on the cell surface, and hence in the modulation of the TNF-induced apoptosis. This chain is Endosome-associated-trafficking regulator 1, found in Mus musculus (Mouse).